A 374-amino-acid chain; its full sequence is Cyclin-D (374 aa).

This sequence belongs to the cyclin family. Cyclin D subfamily.

The protein is Cyclin-D (CycD) of Ostreococcus tauri.